The primary structure comprises 61 residues: Disintegrin rubistatin (61 aa).

The region spanning 1–61 (NPCCDAATCK…ADCPRNGLYG (61 aa)) is the Disintegrin domain. Disulfide bonds link C3–C26, C17–C23, C22–C47, and C35–C54. The short motif at 39 to 41 (MVD) is the Cell attachment site; atypical (MVD) element.

It belongs to the venom metalloproteinase (M12B) family. P-II subfamily. P-IIa sub-subfamily. As to quaternary structure, monomer. As to expression, expressed by the venom gland.

The protein localises to the secreted. In terms of biological role, recombinant disintegrin rubistatin inhibits ADP-induced platelet aggregation. In addition, it strongly induces apoptosis, and inhibits cell migration and proliferation of the human cancer cell line SK-Mel-28. In Crotalus ruber ruber (Red diamond rattlesnake), this protein is Disintegrin rubistatin.